The primary structure comprises 333 residues: Mevalonate kinase (333 aa).

ATP is bound at residue 109–119 (PVGAGLGSSAA). The Proton acceptor role is filled by aspartate 160.

The protein belongs to the GHMP kinase family. Mevalonate kinase subfamily. As to quaternary structure, homodimer. Mg(2+) serves as cofactor.

It is found in the cytoplasm. The catalysed reaction is (R)-mevalonate + ATP = (R)-5-phosphomevalonate + ADP + H(+). It participates in isoprenoid biosynthesis; isopentenyl diphosphate biosynthesis via mevalonate pathway; isopentenyl diphosphate from (R)-mevalonate: step 1/3. Its function is as follows. Catalyzes the phosphorylation of (R)-mevalonate (MVA) to (R)-mevalonate 5-phosphate (MVAP). Functions in the mevalonate (MVA) pathway leading to isopentenyl diphosphate (IPP), a key precursor for the biosynthesis of isoprenoid compounds such as archaeal membrane lipids. The polypeptide is Mevalonate kinase (Thermococcus sibiricus (strain DSM 12597 / MM 739)).